The chain runs to 400 residues: Putative niacin/nicotinamide transporter NiaP (400 aa).

Over 1-14 the chain is Cytoplasmic; the sequence is MGKQQPISQRKLLG. A helical transmembrane segment spans residues 15 to 35; that stretch reads VAGLGWLFDAMDVGILSFIIA. Residues 36–49 lie on the Extracellular side of the membrane; it reads ALHVEWNLSPEEMK. A helical membrane pass occupies residues 50–70; it reads WIGSVNSIGMAAGAFLFGLLA. Over 71-77 the chain is Cytoplasmic; that stretch reads DRIGRKK. 2 consecutive transmembrane segments (helical) span residues 78-98 and 99-119; these read VFII…FVTS and LSAF…ELPV. The Cytoplasmic segment spans residues 120-142; it reads ASTLVSEAVVPEKRGRVIVLLES. Residues 143-163 form a helical membrane-spanning segment; that stretch reads FWAVGWLAAALISYFVIPSFG. The Extracellular segment spans residues 164–165; it reads WQ. A helical transmembrane segment spans residues 166-186; that stretch reads AALLLTALTAFYALYLRTSLP. Residues 187 to 217 lie on the Cytoplasmic side of the membrane; that stretch reads DSPKYESLSAKKRSMWENVKSVWARQYIRPT. A helical membrane pass occupies residues 218–238; it reads VMLSIVWFCVVFSYYGMFLWL. At 239-253 the chain is on the extracellular side; the sequence is PSVMLLKGFSMIQSF. A helical transmembrane segment spans residues 254–274; the sequence is EYVLLMTLAQLPGYFSAAWLI. Topologically, residues 275–280 are cytoplasmic; it reads EKAGRK. Residues 281-301 form a helical membrane-spanning segment; it reads WILVVYLIGTAGSAYFFGTAD. Residues 302-304 are Extracellular-facing; that stretch reads SLS. Residues 305–325 traverse the membrane as a helical segment; that stretch reads LLLTAGVLLSFFNLGAWGVLY. Residues 326–343 lie on the Cytoplasmic side of the membrane; it reads AYTPEQYPTAIRATGSGT. The helical transmembrane segment at 344 to 364 threads the bilayer; it reads TAAFGRIGGIFGPLLVGTLAA. Topologically, residues 365–370 are extracellular; that stretch reads RHISFS. A helical membrane pass occupies residues 371–391; it reads VIFSIFCIAILLAVACILIMG. Residues 392–400 are Cytoplasmic-facing; that stretch reads KETKQTELE.

Belongs to the major facilitator superfamily. Sugar transporter (TC 2.A.1.1) family.

Its subcellular location is the cell membrane. Functionally, probably involved in the uptake of amidated and deamidated forms of niacin. Increases the growth rate of E.coli that is unable to make niacin de novo; confers increased sensitivity to the toxic niacin analog 6-amino-nicotinamide to wild-type E.coli. There is probably another mechanism for niacin uptake. The chain is Putative niacin/nicotinamide transporter NiaP from Bacillus subtilis (strain 168).